A 308-amino-acid chain; its full sequence is MKNLTGLCNLPAGDIHTLLDLAAVFKKRLVTPDPSFSVTLQNKRIALVFFENSTRTRFSFDIAARHLGGSTLSFSASGSSVSKGESLGDTIRNLEAMQVDAFVLRHASSGAADFIAGITAKTVINAGDGSHEHPTQALLDIFTLREHFGAVKGLNIVILGDVLHSRVARSNIFGLKTLGANVAVCGPATLLFSDTSHLGVSIFTDLDKAIEWADAALVLRLQLERATGGYLPSLEEYSTHFGLNDERLERVRKHLLVLHPGPINREIEISNNVADRIQPPGYSKSMLLEQVSNGVAVRMAVLQTLLAG.

The carbamoyl phosphate site is built by Arg-55 and Thr-56. Lys-83 provides a ligand contact to L-aspartate. Carbamoyl phosphate contacts are provided by Arg-105, His-133, and Gln-136. Residues Arg-166 and Arg-220 each coordinate L-aspartate. Carbamoyl phosphate-binding residues include Gly-261 and Pro-262.

The protein belongs to the aspartate/ornithine carbamoyltransferase superfamily. ATCase family. In terms of assembly, heterododecamer (2C3:3R2) of six catalytic PyrB chains organized as two trimers (C3), and six regulatory PyrI chains organized as three dimers (R2).

The catalysed reaction is carbamoyl phosphate + L-aspartate = N-carbamoyl-L-aspartate + phosphate + H(+). It functions in the pathway pyrimidine metabolism; UMP biosynthesis via de novo pathway; (S)-dihydroorotate from bicarbonate: step 2/3. In terms of biological role, catalyzes the condensation of carbamoyl phosphate and aspartate to form carbamoyl aspartate and inorganic phosphate, the committed step in the de novo pyrimidine nucleotide biosynthesis pathway. The sequence is that of Aspartate carbamoyltransferase catalytic subunit from Chlorobium limicola (strain DSM 245 / NBRC 103803 / 6330).